Consider the following 444-residue polypeptide: ATP-dependent protease ATPase subunit HslU (444 aa).

ATP contacts are provided by residues isoleucine 18, 60–65 (GVGKTE), aspartate 256, glutamate 322, and arginine 394.

This sequence belongs to the ClpX chaperone family. HslU subfamily. In terms of assembly, a double ring-shaped homohexamer of HslV is capped on each side by a ring-shaped HslU homohexamer. The assembly of the HslU/HslV complex is dependent on binding of ATP.

The protein resides in the cytoplasm. Functionally, ATPase subunit of a proteasome-like degradation complex; this subunit has chaperone activity. The binding of ATP and its subsequent hydrolysis by HslU are essential for unfolding of protein substrates subsequently hydrolyzed by HslV. HslU recognizes the N-terminal part of its protein substrates and unfolds these before they are guided to HslV for hydrolysis. This chain is ATP-dependent protease ATPase subunit HslU, found in Klebsiella pneumoniae (strain 342).